Consider the following 228-residue polypeptide: Lipoprotein-releasing system ATP-binding protein LolD (228 aa).

The ABC transporter domain maps to 6–225; that stretch reads LEAKDVYKHF…ILHMQDGLWV (220 aa). An ATP-binding site is contributed by 42–49; it reads GASGSGKS.

The protein belongs to the ABC transporter superfamily. Lipoprotein translocase (TC 3.A.1.125) family. As to quaternary structure, the complex is composed of two ATP-binding proteins (LolD) and two transmembrane proteins (LolC and LolE).

The protein resides in the cell inner membrane. In terms of biological role, part of the ABC transporter complex LolCDE involved in the translocation of mature outer membrane-directed lipoproteins, from the inner membrane to the periplasmic chaperone, LolA. Responsible for the formation of the LolA-lipoprotein complex in an ATP-dependent manner. In Acinetobacter baylyi (strain ATCC 33305 / BD413 / ADP1), this protein is Lipoprotein-releasing system ATP-binding protein LolD.